Here is a 212-residue protein sequence, read N- to C-terminus: Methylthioribulose-1-phosphate dehydratase (212 aa).

2 residues coordinate Zn(2+): His-97 and His-99.

This sequence belongs to the aldolase class II family. MtnB subfamily. As to quaternary structure, homotetramer. It depends on Zn(2+) as a cofactor.

The catalysed reaction is 5-(methylsulfanyl)-D-ribulose 1-phosphate = 5-methylsulfanyl-2,3-dioxopentyl phosphate + H2O. Its pathway is amino-acid biosynthesis; L-methionine biosynthesis via salvage pathway; L-methionine from S-methyl-5-thio-alpha-D-ribose 1-phosphate: step 2/6. In terms of biological role, catalyzes the dehydration of methylthioribulose-1-phosphate (MTRu-1-P) into 2,3-diketo-5-methylthiopentyl-1-phosphate (DK-MTP-1-P). This Bacillus mycoides (strain KBAB4) (Bacillus weihenstephanensis) protein is Methylthioribulose-1-phosphate dehydratase.